Reading from the N-terminus, the 128-residue chain is Cytochrome c oxidase subunit 5B, mitochondrial (128 aa).

The transit peptide at 1–30 (MKRGSAALEVRELKMQTPTASCVLSTQRAN) directs the protein to the mitochondrion. N6-acetyllysine occurs at positions 67 and 85. The Zn(2+) site is built by C90, C92, C112, and C115. The residue at position 120 (K120) is an N6-acetyllysine.

It belongs to the cytochrome c oxidase 5b family. In terms of tissue distribution, expressed in testis. Not expressed in brain, heart, liver, kidney, spleen, lung, duodenum, muscle, epididymis, vagina, uterus and ovary.

Its subcellular location is the mitochondrion inner membrane. In terms of biological role, this protein is one of the nuclear-coded polypeptide chains of cytochrome c oxidase, the terminal oxidase in mitochondrial electron transport. This chain is Cytochrome c oxidase subunit 5B, mitochondrial, found in Vulpes vulpes (Red fox).